We begin with the raw amino-acid sequence, 265 residues long: Photosystem II 22 kDa protein, chloroplastic (265 aa).

The N-terminal 59 residues, 1–59, are a transit peptide targeting the chloroplast; that stretch reads MAQTMLLTSGVTAGHFLRNKSPLAQPKVHHLFLSGNSPVALPSRRQSFVPLALFKPKTK. Repeat copies occupy residues 54-158 and 159-264. 4 helical membrane passes run 96–116, 130–150, 195–215, and 229–249; these read VAMIGFAASLLGEALTGKGIL, AEPLLLFFILFTLLGAIGALG, LFVGRLAQLGIAFSLIGEIIT, and IPIQDIEPLVLLNVAFFFFAA.

It belongs to the ELIP/psbS family.

The protein localises to the plastid. It localises to the chloroplast thylakoid membrane. Functionally, plays an important role in non-photochemical quenching (NPQ), a process maintains the balance between dissipation and utilization of light energy to minimize generation of oxidizing molecules, thereby protecting the plant against photo-oxidative damage; acts upstream of DLDG1. Is not necessary for efficient light harvesting and photosynthesis. This is Photosystem II 22 kDa protein, chloroplastic from Arabidopsis thaliana (Mouse-ear cress).